We begin with the raw amino-acid sequence, 175 residues long: MGALVIRGIRNFNLENRAEREISKMKPSVAPRHPSTNSLLREQISLYPEVKGEIARKDEKLLSFLKDVYVDSKDPVSSLQVKAAETCQEPKEFRLPKDHHFDMINIKSIPKGKISIVEALTLLNNHKLFPETWTAEKIMQEYQLEQKDVNSLLKYFVTFEVEIFPPEDKKAIRSK.

Residue Gly-2 is the site of N-myristoyl glycine attachment. Ser-35 carries the phosphoserine modification.

This sequence belongs to the NDUFAF4 family. Binds calmodulin. Interacts with NDUFAF3. In terms of assembly, (Microbial infection) Interacts with the vesicular stomatitis virus matrix protein/M; the interaction inhibits viral propagation. Phosphorylated on serine. Prolactin stimulate serine phosphorylation.

The protein resides in the mitochondrion. The protein localises to the membrane. Functionally, involved in the assembly of mitochondrial NADH:ubiquinone oxidoreductase complex (complex I). May be involved in cell proliferation and survival of hormone-dependent tumor cells. May be a regulator of breast tumor cell invasion. This chain is NADH dehydrogenase [ubiquinone] 1 alpha subcomplex assembly factor 4, found in Homo sapiens (Human).